Consider the following 125-residue polypeptide: Calcitonin gene-related peptide 1 (125 aa).

The N-terminal stretch at 1–25 is a signal peptide; the sequence is MVMLKISSFLAVYALVVCQMDSFQA. Residues 26-77 constitute a propeptide that is removed on maturation; the sequence is APVRPGLESITDRVTLSDYEARRLLNALVKDFIQMTAEELEQASEGNSVTAQ. Cys81 and Cys86 form a disulfide bridge. Phe116 carries the phenylalanine amide modification. Residues 122–125 constitute a propeptide that is removed on maturation; it reads SVQI.

Belongs to the calcitonin family.

It localises to the secreted. CGRP1/CALCA is a peptide hormone that induces vasodilation mediated by the CALCRL-RAMP1 receptor complex. Dilates a variety of vessels including the coronary, cerebral and systemic vasculature. Its abundance in the CNS also points toward a neurotransmitter or neuromodulator role. It also elevates platelet cAMP. CGRP1 can also bind and activate CALCR-RAMP1 (AMYR1) receptor complex. In Gallus gallus (Chicken), this protein is Calcitonin gene-related peptide 1 (CALCA).